Consider the following 185-residue polypeptide: Hypoxanthine/guanine phosphoribosyltransferase (185 aa).

This sequence belongs to the purine/pyrimidine phosphoribosyltransferase family. Archaeal HPRT subfamily. In terms of assembly, homodimer.

The protein resides in the cytoplasm. The enzyme catalyses IMP + diphosphate = hypoxanthine + 5-phospho-alpha-D-ribose 1-diphosphate. It catalyses the reaction GMP + diphosphate = guanine + 5-phospho-alpha-D-ribose 1-diphosphate. The protein operates within purine metabolism; IMP biosynthesis via salvage pathway; IMP from hypoxanthine: step 1/1. Catalyzes a salvage reaction resulting in the formation of IMP that is energically less costly than de novo synthesis. The protein is Hypoxanthine/guanine phosphoribosyltransferase of Methanococcus maripaludis (strain C5 / ATCC BAA-1333).